The sequence spans 832 residues: Mechanosensitive cation channel TMEM63B (832 aa).

At 1–40 the chain is on the extracellular side; it reads MLPFLLATLGTTALNNSNPKDYCYSARIRSTVLQGLPFGG. The helical transmembrane segment at 41–65 threads the bilayer; sequence VPTVLALDFMCFLALLFLFSILRKV. Cys-51 carries S-palmitoyl cysteine lipidation. The Cytoplasmic segment spans residues 66–145; it reads AWDYGRLALV…KDDEIRDKCG (80 aa). The short motif at 86-88 is the Mediates endoplasmic reticulum retention element; it reads RDR. Phosphoserine occurs at positions 111, 113, 114, and 115. Cys-126 carries the S-palmitoyl cysteine lipid modification. Residues 146–178 traverse the membrane as a helical segment; it reads GDAVHYLSFQRHIIGLLVVVGVLSVGIVLPVNF. The Extracellular segment spans residues 179-202; that stretch reads SGDLLENNAYSFGRTTIANLKSGN. The chain crosses the membrane as a helical span at residues 203 to 227; sequence NLLWLHTSFAFLYLLLTVYSMRRHT. At 228–427 the chain is on the cytoplasmic side; sequence SKMRYKEDDL…IYWEHLSIRG (200 aa). The tract at residues 231-426 is intracellular linker IL2; confers mechanosensitivity; the sequence is RYKEDDLVKR…NIYWEHLSIR (196 aa). Residues Cys-382 and Cys-398 are each lipidated (S-palmitoyl cysteine). Residues 428-457 form a helical membrane-spanning segment; that stretch reads FIWWLRCLVINVVLFILLFFLTTPAIIITT. Residues 458 to 472 lie on the Extracellular side of the membrane; that stretch reads MDKFNVTKPVEYLNN. N-linked (GlcNAc...) asparagine glycosylation is present at Asn-462. The helical transmembrane segment at 473 to 502 threads the bilayer; the sequence is PIITQFFPTLLLWCFSALLPTIVYYSAFFE. Topologically, residues 503–506 are cytoplasmic; that stretch reads AHWT. A helical transmembrane segment spans residues 507 to 543; it reads RSGENRTTMHKCYTFLIFMVLLLPSLGLSSLDLFFRW. At 544-566 the chain is on the extracellular side; it reads LFDKKFLAEAAIRFECVFLPDNG. The helical transmembrane segment at 567 to 599 threads the bilayer; sequence AFFVNYVIASAFIGNAMDLLRIPGLLMYMIRLC. The interval 567–599 is gating helix; the sequence is AFFVNYVIASAFIGNAMDLLRIPGLLMYMIRLC. Topologically, residues 600–619 are cytoplasmic; it reads LARSAAERRNVKRHQAYEFQ. A helical membrane pass occupies residues 620–638; that stretch reads FGAAYAWMMCVFTVVMTYS. Residues 639–641 are Extracellular-facing; sequence ITC. Residues 642–666 form a helical membrane-spanning segment; that stretch reads PIIVPFGLMYMLLKHLVDRYNLYYA. Topologically, residues 667–673 are cytoplasmic; it reads YLPAKLD. A helical transmembrane segment spans residues 674–702; the sequence is KKIHSGAVNQVVAAPILCLFWLLFFSTMR. At 703-707 the chain is on the extracellular side; it reads TGFLA. The chain crosses the membrane as a helical span at residues 708 to 728; it reads PTSMFTFVVLVITIVICLCHV. S-palmitoyl cysteine attachment occurs at residues Cys-726 and Cys-729. At 729–832 the chain is on the cytoplasmic side; that stretch reads CFGHFKYLSA…DSLIENEIHQ (104 aa). The tract at residues 780-814 is disordered; sequence EVDGDGDGAPGSSGDEPPSSSSQDEELLMPPDALT. Low complexity predominate over residues 789 to 801; the sequence is PGSSGDEPPSSSS.

Belongs to the CSC1 (TC 1.A.17) family. As to quaternary structure, monomer. Interacts with SLC19A2; interaction is required for the phospholipid scramblase activity. In terms of processing, palmitoylation is required for localization to the plasma membrane and stability. N-Glycosylated.

The protein localises to the cell membrane. It localises to the endoplasmic reticulum membrane. Its subcellular location is the lysosome membrane. The protein resides in the early endosome membrane. The catalysed reaction is Ca(2+)(in) = Ca(2+)(out). It catalyses the reaction Mg(2+)(in) = Mg(2+)(out). The enzyme catalyses K(+)(in) = K(+)(out). It carries out the reaction Na(+)(in) = Na(+)(out). The catalysed reaction is Cs(+)(in) = Cs(+)(out). It catalyses the reaction a 1,2-diacyl-sn-glycero-3-phosphocholine(in) = a 1,2-diacyl-sn-glycero-3-phosphocholine(out). The enzyme catalyses a sphingomyelin(in) = a sphingomyelin(out). Functionally, mechanosensitive cation channel with low conductance and high activation threshold. Osmosensitive cation channel preferentially activated by hypotonic stress. Also acts as a phospholipid scramblase in response to changes in membrane structure: upon changes in membrane curvature and thickness, alters its conformation and translocates phospholipids, such as phosphatidylcholine and sphingomyelin, thereby controlling plasma membrane lipid distribution. Forms a heterodimer with SLC19A2, which mediates phospholipid scramblase activity following Ca(2+) stimulation. Expressed in excitatory neurons of the subfornical organ and functions as a thirst receptor that mediates neuronal response to hyperosmolality to drive thirst and drinking behavior. Facilitates intestinal motility by promoting proliferation of intestinal stem cells. Essential for the baby's first breath and respiration throughout life. Upon lung inflation conducts cation currents in alveolar type 1 and 2 cells triggering lamellar body exocytosis and surfactant secretion into airspace. Acts as an osmosensor in cochlear outer hair cells (OHCs) where it mediates calcium influx and regulatory volume decrease response. Required for the maintenance of OHC morphology, OHC survival and normal hearing. The polypeptide is Mechanosensitive cation channel TMEM63B (Homo sapiens (Human)).